A 194-amino-acid chain; its full sequence is Calcium channel flower (194 aa).

The Cytoplasmic portion of the chain corresponds to 1-34 (MSFAEKITGLLARPNQQDPIGPEQPWYLKYGSRL). The helical transmembrane segment at 35–55 (LGIVAAFFAILFGLWNVFSII) threads the bilayer. Residues 56–65 (TLSVSCLVAG) are Extracellular-facing. The chain crosses the membrane as a helical span at residues 66–88 (ILQMVAGFVVMLLEAPCCFVCFG). Residues 89–106 (QVNEIAEKVESKPLYFRA) lie on the Cytoplasmic side of the membrane. Residues 107-127 (GLYIAMAIPPIILCFGLASLF) traverse the membrane as a helical segment. At 128–194 (GSGLIFGTGV…TGAVGTDSNV (67 aa)) the chain is on the extracellular side. 2 important for promoting apoptosis regions span residues 135–157 (TGVVYGMMALGKKASAEDMRAAA) and 135–192 (TGVV…GTDS).

This sequence belongs to the calcium channel flower family. In terms of assembly, associates with the dally/ magu complex. Homomultimer. Associates with the dally/ magu complex. In terms of tissue distribution, detected in the imaginal wing disk (at protein level). Detected throughout the adult brain, including the optic lobe but, at much lower levels of expression than isoform Lose-A. As to expression, detected in the optic lobe (at protein level). Detected throughout the adult brain, including the optic lobe. Expressed in damaged and undamaged optic lobe neurons. In terms of tissue distribution, expressed in optic lobe neurons, with higher levels of expression in suboptimal neurons. Specifically expressed in injury-damaged optic lobe neurons.

The protein resides in the cell membrane. The protein localises to the cytoplasmic vesicle. Its subcellular location is the secretory vesicle. It localises to the synaptic vesicle membrane. It is found in the presynaptic cell membrane. The protein resides in the endosome. The protein localises to the synaptic vesicle. Channel activity is inhibited by La(3+), which reduces Ca(2+) influx and thus inhibits it's function in promoting activity-dependent bulk endocytosis (ADBE) in response to high stimuli. Transmembrane protein which mediates synaptic endocytosis, fitness-based cell culling, neuronal culling, morphogen gradient scaling, and calcium transport. Regulates synaptic endocytosis and hence couples exo- with endocytosis. Controls two major modes of synaptic vesicle (SV) endocytosis in the synaptic boutons of neuromuscular junctions (NMJs); Ca(2+) channel-independent Clathrin-mediated endocytosis (CME) in response to mild stimulation, and Ca(2+) channel-dependent activity-dependent bulk endocytosis (ADBE) in response to strong stimulation. Functions in ADBE and subsequent SV reformation from bulk endosomes by initiating Ca(2+) channel-dependent phosphatidylinositol 4,5-bisphosphate (PtdIns(4,5)P2) compartmentalization in synaptic boutons. There it acts at the periactive zone to provide the low Ca(2+) levels required to initiate Calcineurin activation and upregulate PtdIns(4,5)P2. Conversely PtdIns(4,5)P2 enhances fwe Ca(2+) channel-activity, establishing a positive feedback loop that induces PtdIns(4,5)P2 microdomain at the periactive zone. These microdomains trigger bulk membrane invagination (i.e. ADBE) by triggering actin polymerization while also promoting localization of fwe to bulk endosomes, thereby removing the ADBE trigger to reduce endocytosis and prevent excess membrane uptake. PtdIns(4,5)P2 then promotes SV reformation from the bulk endosomes, to coordinate ADBE and subsequent SV reformation. Different combinations of the flower isoforms at the cell membrane are also required for the identification and elimination of suboptimal or supernumerary cells during development, regeneration, and adulthood. Required for the recognition and elimination of unfit cells in the developing wing during cell competition. Also required for efficient identification and elimination of injured, damaged and/or dysfunctional neurons during regeneration of the adult brain. In the developing pupal retina, mediates the elimination of unwanted postmitotic neurons, including supernumerary photoreceptor neurons that form at the periphery of the retina and are contained within incomplete ommatidia units. Downstream of the flower fitness fingerprints, cells identified as unwanted or unfit are eliminated via apoptosis through the expression of ahuizotl (azot). However, the cells marked for elimination by the flower isoforms only undergo apoptosis if additional thresholds are met; (1) their neighboring fit/healthy cells express different levels of the fwe isoforms, and (2) the levels of the protective signal SPARC expressed by the loser or unwanted cells are unable to inhibit caspase activation. These additional thresholds for flower-mediated apoptosis, allows useful cells to recover from transient and limited stress before they are unnecessarily eliminated. Functions with dally and magu in a mechanism of scaling, which utilises apoptosis to ensure that the dpp morphogen gradient, which mediates organ growth, remains proportional to the size of the growing wing. In this mechanism, fwe represses dally- and Magu-dependent activity in expanding the gradient, and dally/Magu inhibits fwe-dependent apoptosis to keep cell death rate low. When the levels of these different proteins are optimally regulated the gradient correctly scales with organ growth but when this fails, fwe-mediated apoptosis is activated to trim the developing tissue to match the correct size of the gradient. Its function is as follows. Functions with the other flower isoforms to produce tissue-specific fitness fingerprints that identify unfit or fit cells during cell selection processes in order to maintain tissue health. In the wing imaginal disk, this isoform is highly expressed in healthy/normal cells but is down-regulated in cells with decreased fitness. During cell competition, if levels of this isoform in unfit cells is lower than in the surrounding neighboring cells, the suboptimal cells are recognized as 'loser' cells, and undergo elimination via apoptosis to be replaced by the surrounding healthy 'winner' cell population. In terms of biological role, functions with the other flower isoforms to produce tissue-specific fitness fingerprints that identify unfit or fit cells during cell selection processes in order to maintain tissue health. In the wing imaginal disk, this isoform displays low levels of expression in healthy/normal cells but is up-regulated in cells with decreased fitness. During cell competition, if levels of this isoform in unfit cells is higher than in the surrounding neighboring cells, the suboptimal cells are recognized as 'loser' cells, and undergo elimination via apoptosis to be replaced by the surrounding healthy 'winner' cell population. Functionally, functions with the other flower isoforms to produce tissue-specific fitness fingerprints that identify unfit cells for cell selection processes during development, regeneration, and to maintain tissue health. During cell competition in certain tissues, marks suboptimal or damaged cells as 'loser' cells. In cells of the wing imaginal disk and damaged or dysfunctional neurons in the adult optic lobe, this isoform displays low to no expression in healthy/normal cells but is up-regulated in cells with decreased fitness or damage-affected neurons. During cell competition, if levels of this isoform in unfit cells is higher than in the surrounding neighboring cells, the suboptimal cells are recognized as 'loser' cells, and undergo elimination via apoptosis to be replaced by the surrounding healthy/undamaged 'winner' cell population. In the developing pupal retina, also required for the recognition and elimination of postmitotic neurons, including supernumerary photoreceptor neurons that form at the periphery of the retina and are contained within incomplete ommatidia units. Activity at the peripheral retina is induced by the wg signaling pathway but, once activated, it promotes apoptosis of supernumerary photoreceptor neurons independently of wg signaling and snail function. This is Calcium channel flower (fwe) from Drosophila melanogaster (Fruit fly).